Here is a 352-residue protein sequence, read N- to C-terminus: uncharacterized protein (352 aa).

8 helical membrane passes run 6–26 (FIFL…IINP), 30–50 (FHIV…IINI), 76–96 (IFLT…FVII), 151–171 (EFII…LPFL), 197–217 (FILV…LPLI), 226–246 (VKVD…IEGL), 291–311 (WLPI…ASFA), and 330–350 (LIGG…AKIF).

Belongs to the CitM (TC 2.A.11) transporter family.

Its subcellular location is the cell membrane. This is an uncharacterized protein from Methanocaldococcus jannaschii (strain ATCC 43067 / DSM 2661 / JAL-1 / JCM 10045 / NBRC 100440) (Methanococcus jannaschii).